A 239-amino-acid chain; its full sequence is uncharacterized protein (239 aa).

This sequence belongs to the initiator RepB protein family.

Functionally, mutations in ORF 239 affects the incN plasmid pUC1 E.coli polA-independence but not its autonomous replication ability. This is an uncharacterized protein from Escherichia coli.